The sequence spans 451 residues: MGRLFGTDGVRGRANADLTPELGLAVAVAAAHTLAEADRSHPPLAVVGRDTRASGEMLESAVVAGLTSAGANVVRVGVLPTPAVAFLTAEAKADIGVMLSASHNPMPDNGIKLFAAGGHKLPDEIEMKIEAAVEANTTTAWERPVGAGVGRVHDLLDGADHYVQHLVGTVPHRLDGIKVVVDCANGAAAEVAPAAYREAGAEVVAIHAEPNGLNINDECGSNHVAALRQAVVEHGAQLGIAHDGDADRCVAVTADGDEVDGDQVMAILALAMREAGTLTADTLVATVMSNLGLRIAMSREGIRLVETKVGDRYVLEELRASGLALGGEQSGHIVMPAHATTGDGVLTGLHLMSRMAGTGRPLAELAAVVSPLPQVLINVPVGDRTVGAAAPAVRAEVARAEAELGDAGRVLLRPSGTEPLVRVMVEAGTETTAREVAERIAEQVRTASPVS.

The active-site Phosphoserine intermediate is serine 102. 4 residues coordinate Mg(2+): serine 102, aspartate 243, aspartate 245, and aspartate 247. A Phosphoserine modification is found at serine 102.

Belongs to the phosphohexose mutase family. It depends on Mg(2+) as a cofactor. Activated by phosphorylation.

It carries out the reaction alpha-D-glucosamine 1-phosphate = D-glucosamine 6-phosphate. Its function is as follows. Catalyzes the conversion of glucosamine-6-phosphate to glucosamine-1-phosphate. This Salinispora tropica (strain ATCC BAA-916 / DSM 44818 / JCM 13857 / NBRC 105044 / CNB-440) protein is Phosphoglucosamine mutase.